A 171-amino-acid chain; its full sequence is Crossover junction endodeoxyribonuclease RuvC (171 aa).

Catalysis depends on residues D11, E71, and D143. D11, E71, and D143 together coordinate Mg(2+).

This sequence belongs to the RuvC family. In terms of assembly, homodimer which binds Holliday junction (HJ) DNA. The HJ becomes 2-fold symmetrical on binding to RuvC with unstacked arms; it has a different conformation from HJ DNA in complex with RuvA. In the full resolvosome a probable DNA-RuvA(4)-RuvB(12)-RuvC(2) complex forms which resolves the HJ. Requires Mg(2+) as cofactor.

It is found in the cytoplasm. The catalysed reaction is Endonucleolytic cleavage at a junction such as a reciprocal single-stranded crossover between two homologous DNA duplexes (Holliday junction).. Functionally, the RuvA-RuvB-RuvC complex processes Holliday junction (HJ) DNA during genetic recombination and DNA repair. Endonuclease that resolves HJ intermediates. Cleaves cruciform DNA by making single-stranded nicks across the HJ at symmetrical positions within the homologous arms, yielding a 5'-phosphate and a 3'-hydroxyl group; requires a central core of homology in the junction. The consensus cleavage sequence is 5'-(A/T)TT(C/G)-3'. Cleavage occurs on the 3'-side of the TT dinucleotide at the point of strand exchange. HJ branch migration catalyzed by RuvA-RuvB allows RuvC to scan DNA until it finds its consensus sequence, where it cleaves and resolves the cruciform DNA. In Chelativorans sp. (strain BNC1), this protein is Crossover junction endodeoxyribonuclease RuvC.